The chain runs to 122 residues: MIQPQSRLKVADNTGAKEVMCIRVLGGSNRKFANIGDIIVCSVKDATPGGVVKKGDVVKAVIVRTRKGIRREDGTYIRFDDNAAVLIREDKTPRGTRIFGPVARELRDKDFMKIVSLAPEVL.

Belongs to the universal ribosomal protein uL14 family. As to quaternary structure, part of the 50S ribosomal subunit. Forms a cluster with proteins L3 and L19. In the 70S ribosome, L14 and L19 interact and together make contacts with the 16S rRNA in bridges B5 and B8.

Its function is as follows. Binds to 23S rRNA. Forms part of two intersubunit bridges in the 70S ribosome. The sequence is that of Large ribosomal subunit protein uL14 from Caldicellulosiruptor saccharolyticus (strain ATCC 43494 / DSM 8903 / Tp8T 6331).